Here is a 356-residue protein sequence, read N- to C-terminus: Thiamine thiazole synthase, chloroplastic (356 aa).

Residues 1 to 51 constitute a chloroplast transit peptide; that stretch reads MAAMASTAFAPSVSSTTNKLFDSSFHGAPMSPSLLRLQPIKSSRPNNLSIS. Residues A101, 121–122, G129, and A194 each bind substrate; that span reads EQ. At C223 the chain carries 2,3-didehydroalanine (Cys). Substrate contacts are provided by residues D225, H240, M292, and 302–304; that span reads RMG.

This sequence belongs to the THI4 family. Homooctamer. Fe cation serves as cofactor. Post-translationally, during the catalytic reaction, a sulfide is transferred from Cys-223 to a reaction intermediate, generating a dehydroalanine residue.

It localises to the plastid. The protein localises to the chloroplast. The enzyme catalyses [ADP-thiazole synthase]-L-cysteine + glycine + NAD(+) = [ADP-thiazole synthase]-dehydroalanine + ADP-5-ethyl-4-methylthiazole-2-carboxylate + nicotinamide + 3 H2O + 2 H(+). In terms of biological role, involved in biosynthesis of the thiamine precursor thiazole. Catalyzes the conversion of NAD and glycine to adenosine diphosphate 5-(2-hydroxyethyl)-4-methylthiazole-2-carboxylic acid (ADT), an adenylated thiazole intermediate. The reaction includes an iron-dependent sulfide transfer from a conserved cysteine residue of the protein to a thiazole intermediate. The enzyme can only undergo a single turnover, which suggests it is a suicide enzyme. May have additional roles in adaptation to various stress conditions and in DNA damage tolerance. The polypeptide is Thiamine thiazole synthase, chloroplastic (Citrus sinensis (Sweet orange)).